The primary structure comprises 123 residues: Large ribosomal subunit protein uL24 (123 aa).

Belongs to the universal ribosomal protein uL24 family. In terms of assembly, part of the 50S ribosomal subunit.

Functionally, one of two assembly initiator proteins, it binds directly to the 5'-end of the 23S rRNA, where it nucleates assembly of the 50S subunit. Its function is as follows. Located at the polypeptide exit tunnel on the outside of the subunit. In Methanocella arvoryzae (strain DSM 22066 / NBRC 105507 / MRE50), this protein is Large ribosomal subunit protein uL24.